The primary structure comprises 464 residues: UDP-glycosyltransferase 83A1 (464 aa).

Residues Ser295, 341–343 (APQ), 358–366 (HCGWNSTLE), and 380–383 (FADQ) each bind UDP-alpha-D-glucose.

It belongs to the UDP-glycosyltransferase family.

The protein is UDP-glycosyltransferase 83A1 (UGT83A1) of Arabidopsis thaliana (Mouse-ear cress).